A 24-amino-acid polypeptide reads, in one-letter code: SCIKHGDFCDGDNDDCQCCRDNGF.

In terms of processing, disulfide bonds are present. In terms of tissue distribution, expressed by the venom gland.

It localises to the secreted. In terms of biological role, omega-agatoxins are antagonists of voltage-gated calcium channels (Cav). The polypeptide is U4-ctenitoxin-Co1b (Ctenus ornatus (Brazilian spider)).